The chain runs to 469 residues: SVGFKAGVKEYKLTYYTPEYETKDTDILAAFRVTPQPGVPPEEAGXAVXXESSTGTWTAVWTDGLTSLDRYKGRCYXIEPVPGEEDQYIAYVAYPLDXFEEGSVTNMFTSIVGNVFGFKALXALRLEDLRIPPAYIKTFEGPPHGIQVERDKLNKYGRPLLXCTIKPKLGLSAKNYGRACYECLRGGLDFTKDDENVNSQPFMRWRDRFLFCAEAIYKAQAETGEIKGHYLNATAGTCEEMIKRAVFARELGVPIVMHDYLTGGFTANTSLAHYCRDNGLLLHIHRAMHAVIDRQKNHGIHFRVLAKALRMSGGDHIHSGTVVGKLEGERDITLGFVDLLRDDFIEKDRSRGIYFTQDWSSLPGVLPVXSGGIHVXHMPALTEIFGDDSVXXFGGGTLGHPWGNAPGAVANRVSLEACVKARNEGRDLAAEGNEIIREASKWSPELAAACEVWKEIRFNFAAVDTLDPS.

K5 is modified (N6,N6,N6-trimethyllysine). Residues N114 and T164 each contribute to the substrate site. The Proton acceptor role is filled by K166. K168 lines the substrate pocket. 3 residues coordinate Mg(2+): K192, D194, and E195. At K192 the chain carries N6-carboxylysine. Residue H285 is the Proton acceptor of the active site. Substrate contacts are provided by R286, H318, and S370.

Belongs to the RuBisCO large chain family. Type I subfamily. In terms of assembly, heterohexadecamer of 8 large chains and 8 small chains; disulfide-linked. The disulfide link is formed within the large subunit homodimers. Mg(2+) serves as cofactor. The disulfide bond which can form in the large chain dimeric partners within the hexadecamer appears to be associated with oxidative stress and protein turnover.

The protein resides in the plastid. It is found in the chloroplast. The catalysed reaction is 2 (2R)-3-phosphoglycerate + 2 H(+) = D-ribulose 1,5-bisphosphate + CO2 + H2O. It catalyses the reaction D-ribulose 1,5-bisphosphate + O2 = 2-phosphoglycolate + (2R)-3-phosphoglycerate + 2 H(+). In terms of biological role, ruBisCO catalyzes two reactions: the carboxylation of D-ribulose 1,5-bisphosphate, the primary event in carbon dioxide fixation, as well as the oxidative fragmentation of the pentose substrate in the photorespiration process. Both reactions occur simultaneously and in competition at the same active site. This is Ribulose bisphosphate carboxylase large chain from Calycophyllum candidissimum (Degame lemonwood tree).